The following is a 457-amino-acid chain: Siroheme synthase 2 (457 aa).

The tract at residues 1-204 (MDHLPIFCQL…DDRQAVADTT (204 aa)) is precorrin-2 dehydrogenase /sirohydrochlorin ferrochelatase. NAD(+) is bound by residues 22 to 23 (DV) and 43 to 44 (LD). S128 is modified (phosphoserine). The tract at residues 216-457 (GEVVLVGAGP…RDKLNWFSNH (242 aa)) is uroporphyrinogen-III C-methyltransferase. P225 contributes to the S-adenosyl-L-methionine binding site. The Proton acceptor role is filled by D248. K270 serves as the catalytic Proton donor. S-adenosyl-L-methionine-binding positions include 301 to 303 (GGD), I306, 331 to 332 (TA), M382, and G411.

It in the N-terminal section; belongs to the precorrin-2 dehydrogenase / sirohydrochlorin ferrochelatase family. This sequence in the C-terminal section; belongs to the precorrin methyltransferase family.

It catalyses the reaction uroporphyrinogen III + 2 S-adenosyl-L-methionine = precorrin-2 + 2 S-adenosyl-L-homocysteine + H(+). The enzyme catalyses precorrin-2 + NAD(+) = sirohydrochlorin + NADH + 2 H(+). It carries out the reaction siroheme + 2 H(+) = sirohydrochlorin + Fe(2+). It participates in cofactor biosynthesis; adenosylcobalamin biosynthesis; precorrin-2 from uroporphyrinogen III: step 1/1. The protein operates within cofactor biosynthesis; adenosylcobalamin biosynthesis; sirohydrochlorin from precorrin-2: step 1/1. It functions in the pathway porphyrin-containing compound metabolism; siroheme biosynthesis; precorrin-2 from uroporphyrinogen III: step 1/1. Its pathway is porphyrin-containing compound metabolism; siroheme biosynthesis; siroheme from sirohydrochlorin: step 1/1. It participates in porphyrin-containing compound metabolism; siroheme biosynthesis; sirohydrochlorin from precorrin-2: step 1/1. Its function is as follows. Multifunctional enzyme that catalyzes the SAM-dependent methylations of uroporphyrinogen III at position C-2 and C-7 to form precorrin-2 via precorrin-1. Then it catalyzes the NAD-dependent ring dehydrogenation of precorrin-2 to yield sirohydrochlorin. Finally, it catalyzes the ferrochelation of sirohydrochlorin to yield siroheme. The sequence is that of Siroheme synthase 2 from Klebsiella pneumoniae subsp. pneumoniae (strain ATCC 700721 / MGH 78578).